The chain runs to 408 residues: Branched-chain amino acid aminotransferase 2, chloroplastic (408 aa).

A chloroplast-targeting transit peptide spans 1–58 (MDCAAALLPGFHPNYLLCPSRHFSSLLPKTDLSSPLKFQLQNKQLSLASSHGFSPVIC). Arginine 152 contributes to the pyridoxal 5'-phosphate binding site. Catalysis depends on lysine 254, which acts as the Proton acceptor. The residue at position 254 (lysine 254) is an N6-(pyridoxal phosphate)lysine. Residue glutamate 290 participates in pyridoxal 5'-phosphate binding.

The protein belongs to the class-IV pyridoxal-phosphate-dependent aminotransferase family. It depends on pyridoxal 5'-phosphate as a cofactor. In terms of tissue distribution, expressed in lupulin glands and leaves.

The protein localises to the plastid. It is found in the chloroplast. It carries out the reaction L-isoleucine + 2-oxoglutarate = (S)-3-methyl-2-oxopentanoate + L-glutamate. The enzyme catalyses L-leucine + 2-oxoglutarate = 4-methyl-2-oxopentanoate + L-glutamate. It catalyses the reaction L-valine + 2-oxoglutarate = 3-methyl-2-oxobutanoate + L-glutamate. It functions in the pathway amino-acid biosynthesis; L-isoleucine biosynthesis; L-isoleucine from 2-oxobutanoate: step 4/4. Its pathway is amino-acid biosynthesis; L-leucine biosynthesis; L-leucine from 3-methyl-2-oxobutanoate: step 4/4. It participates in amino-acid biosynthesis; L-valine biosynthesis; L-valine from pyruvate: step 4/4. Its function is as follows. Converts 2-oxo acids to branched-chain amino acids. Shows no kinetic preferences corresponding to anabolic or catabolic functions, but likely involved in BCAA biosynthesis. The sequence is that of Branched-chain amino acid aminotransferase 2, chloroplastic from Humulus lupulus (European hop).